The following is a 670-amino-acid chain: E3 ubiquitin-protein ligase MAG2 (670 aa).

2 disordered regions span residues 1–84 (MVEP…TSTR) and 124–145 (EVER…RDEH). Residues 20-39 (DTLNATSNSSKQGVSNNKRN) are compositionally biased toward polar residues. Basic and acidic residues predominate over residues 51-66 (SDGRDNAHNYHGEGRR). The segment at 195–250 (CSICLSEEPVAPRMVTCGHIFCLSCLLNFFSIEETVKNKETGYSKKKKYKECPLCG) adopts an RING-type zinc-finger fold. Positions 609-670 (TEDEKASKEN…LFSSNHQALG (62 aa)) are disordered. Residues 610–622 (EDEKASKENKEFQ) show a composition bias toward basic and acidic residues. Over residues 637–649 (VTDSTDSPPTSNG) the composition is skewed to low complexity.

It belongs to the RNF10 family.

Its subcellular location is the cytoplasm. It catalyses the reaction S-ubiquitinyl-[E2 ubiquitin-conjugating enzyme]-L-cysteine + [acceptor protein]-L-lysine = [E2 ubiquitin-conjugating enzyme]-L-cysteine + N(6)-ubiquitinyl-[acceptor protein]-L-lysine.. It participates in protein modification; protein ubiquitination. Functionally, E3 ubiquitin-protein ligase involved in the degradation of non-functional 18S rRNAs in response to stalled ribosomes. Catalyzes monoubiquitination of RPS3/uS3 in response to stalled ribosomes, initiating a HEL2-dependent response that activates the degradation of non-functional 18S rRNAs. The protein is E3 ubiquitin-protein ligase MAG2 of Saccharomyces cerevisiae (strain ATCC 204508 / S288c) (Baker's yeast).